Here is a 323-residue protein sequence, read N- to C-terminus: uncharacterized protein (323 aa).

Y59 functions as the Proton donor in the catalytic mechanism. Residue 198–208 (SPLAQGLLGGK) coordinates NADP(+).

This sequence belongs to the aldo/keto reductase family. Aldo/keto reductase 2 subfamily.

This is an uncharacterized protein from Mycobacterium tuberculosis (strain CDC 1551 / Oshkosh).